The sequence spans 69 residues: Small ribosomal subunit protein uS14 (69 aa).

Residues cysteine 33, cysteine 36, cysteine 51, and cysteine 54 each coordinate Zn(2+).

This sequence belongs to the universal ribosomal protein uS14 family. Zinc-binding uS14 subfamily. Part of the 30S ribosomal subunit. Requires Zn(2+) as cofactor.

Functionally, binds 16S rRNA, required for the assembly of 30S particles. The chain is Small ribosomal subunit protein uS14 from Nanoarchaeum equitans (strain Kin4-M).